We begin with the raw amino-acid sequence, 750 residues long: Photosystem I P700 chlorophyll a apoprotein A1 (750 aa).

The next 8 helical transmembrane spans lie at 72–95, 158–181, 197–221, 293–311, 348–371, 387–413, 435–457, and 532–550; these read VFSA…FHGA, LYST…FHYH, LNHH…HVSL, TAHH…GHMY, WHAQ…HHMY, LSIF…IFMV, AIIS…LYIH, and FLVH…LILL. [4Fe-4S] cluster is bound by residues Cys574 and Cys583. 2 consecutive transmembrane segments (helical) span residues 590-611 and 664-686; these read HVFL…HFSW and LSAY…MFLF. Residue His675 participates in chlorophyll a' binding. Met683 and Tyr691 together coordinate chlorophyll a. Residue Trp692 coordinates phylloquinone. Residues 724 to 744 traverse the membrane as a helical segment; that stretch reads AVGVAHYLLGGIATTWAFFLA.

It belongs to the PsaA/PsaB family. As to quaternary structure, the PsaA/B heterodimer binds the P700 chlorophyll special pair and subsequent electron acceptors. PSI consists of a core antenna complex that captures photons, and an electron transfer chain that converts photonic excitation into a charge separation. The eukaryotic PSI reaction center is composed of at least 11 subunits. It depends on P700 is a chlorophyll a/chlorophyll a' dimer, A0 is one or more chlorophyll a, A1 is one or both phylloquinones and FX is a shared 4Fe-4S iron-sulfur center. as a cofactor.

The protein resides in the plastid. The protein localises to the chloroplast thylakoid membrane. It catalyses the reaction reduced [plastocyanin] + hnu + oxidized [2Fe-2S]-[ferredoxin] = oxidized [plastocyanin] + reduced [2Fe-2S]-[ferredoxin]. In terms of biological role, psaA and PsaB bind P700, the primary electron donor of photosystem I (PSI), as well as the electron acceptors A0, A1 and FX. PSI is a plastocyanin-ferredoxin oxidoreductase, converting photonic excitation into a charge separation, which transfers an electron from the donor P700 chlorophyll pair to the spectroscopically characterized acceptors A0, A1, FX, FA and FB in turn. Oxidized P700 is reduced on the lumenal side of the thylakoid membrane by plastocyanin. In Chlorokybus atmophyticus (Soil alga), this protein is Photosystem I P700 chlorophyll a apoprotein A1.